The sequence spans 162 residues: Globin CTT-VIIB-7 (162 aa).

The signal sequence occupies residues Met1–Ala16. One can recognise a Globin domain in the interval Pro18–Glu162. Heme b-binding residues include His76 and His111.

The protein belongs to the globin family. In terms of assembly, homodimer.

The protein is Globin CTT-VIIB-7 (CTT-7B7) of Chironomus thummi piger (Midge).